Here is a 286-residue protein sequence, read N- to C-terminus: Bifunctional protein FolD (286 aa).

Residues 165-167 (GRS) and Ser-190 each bind NADP(+).

Belongs to the tetrahydrofolate dehydrogenase/cyclohydrolase family. In terms of assembly, homodimer.

It catalyses the reaction (6R)-5,10-methylene-5,6,7,8-tetrahydrofolate + NADP(+) = (6R)-5,10-methenyltetrahydrofolate + NADPH. It carries out the reaction (6R)-5,10-methenyltetrahydrofolate + H2O = (6R)-10-formyltetrahydrofolate + H(+). It participates in one-carbon metabolism; tetrahydrofolate interconversion. In terms of biological role, catalyzes the oxidation of 5,10-methylenetetrahydrofolate to 5,10-methenyltetrahydrofolate and then the hydrolysis of 5,10-methenyltetrahydrofolate to 10-formyltetrahydrofolate. This Burkholderia lata (strain ATCC 17760 / DSM 23089 / LMG 22485 / NCIMB 9086 / R18194 / 383) protein is Bifunctional protein FolD.